We begin with the raw amino-acid sequence, 91 residues long: Putative septation protein SpoVG (91 aa).

This sequence belongs to the SpoVG family.

Could be involved in septation. The polypeptide is Putative septation protein SpoVG (Clostridium botulinum (strain Alaska E43 / Type E3)).